Here is a 191-residue protein sequence, read N- to C-terminus: Mating-type-like protein ALPHA1 (191 aa).

Residues 118 to 174 (SKKRPMNAFMAFRTYYAQLGTGLKQNTLSVILSEAWNAPETDQNIWDIFAQQFNFAS) constitute a DNA-binding region (alpha box).

The protein belongs to the MATALPHA1 family.

The protein resides in the nucleus. Its function is as follows. Mating type proteins are sequence specific DNA-binding proteins that act as master switches in yeast differentiation by controlling gene expression in a cell type-specific fashion. Transcriptional activator that induces the transcription of alpha-specific genes. The chain is Mating-type-like protein ALPHA1 (MTL1ALPHA1) from Candida glabrata (strain ATCC 2001 / BCRC 20586 / JCM 3761 / NBRC 0622 / NRRL Y-65 / CBS 138) (Yeast).